The sequence spans 734 residues: Translation initiation factor IF-2 (734 aa).

Positions 39 to 110 are disordered; the sequence is SKFAPRSSFT…TGKPETKKRE (72 aa). Basic and acidic residues predominate over residues 82 to 110; that stretch reads DYEKRKLAEQRATRRLKGDTGKPETKKRE. One can recognise a tr-type G domain in the interval 238–405; it reads NRPPIVTVMG…SIVLQAEILD (168 aa). Residues 247 to 254 form a G1 region; sequence GHVDHGKT. A GTP-binding site is contributed by 247–254; it reads GHVDHGKT. Residues 272 to 276 are G2; that stretch reads GITQH. Residues 293–296 are G3; the sequence is DTPG. Residues 293–297 and 347–350 contribute to the GTP site; these read DTPGH and NKCD. The interval 347-350 is G4; that stretch reads NKCD. A G5 region spans residues 383-385; the sequence is SAK.

This sequence belongs to the TRAFAC class translation factor GTPase superfamily. Classic translation factor GTPase family. IF-2 subfamily.

The protein resides in the cytoplasm. In terms of biological role, one of the essential components for the initiation of protein synthesis. Protects formylmethionyl-tRNA from spontaneous hydrolysis and promotes its binding to the 30S ribosomal subunits. Also involved in the hydrolysis of GTP during the formation of the 70S ribosomal complex. The protein is Translation initiation factor IF-2 of Pelagibacter ubique (strain HTCC1062).